A 311-amino-acid chain; its full sequence is Lipoyl synthase (311 aa).

7 residues coordinate [4Fe-4S] cluster: Cys-58, Cys-63, Cys-69, Cys-84, Cys-88, Cys-91, and Ser-298. Residues 70–287 (FGHGTATFMI…EQEALAMGFR (218 aa)) form the Radical SAM core domain.

The protein belongs to the radical SAM superfamily. Lipoyl synthase family. [4Fe-4S] cluster serves as cofactor.

It localises to the cytoplasm. The enzyme catalyses [[Fe-S] cluster scaffold protein carrying a second [4Fe-4S](2+) cluster] + N(6)-octanoyl-L-lysyl-[protein] + 2 oxidized [2Fe-2S]-[ferredoxin] + 2 S-adenosyl-L-methionine + 4 H(+) = [[Fe-S] cluster scaffold protein] + N(6)-[(R)-dihydrolipoyl]-L-lysyl-[protein] + 4 Fe(3+) + 2 hydrogen sulfide + 2 5'-deoxyadenosine + 2 L-methionine + 2 reduced [2Fe-2S]-[ferredoxin]. It participates in protein modification; protein lipoylation via endogenous pathway; protein N(6)-(lipoyl)lysine from octanoyl-[acyl-carrier-protein]: step 2/2. Its function is as follows. Catalyzes the radical-mediated insertion of two sulfur atoms into the C-6 and C-8 positions of the octanoyl moiety bound to the lipoyl domains of lipoate-dependent enzymes, thereby converting the octanoylated domains into lipoylated derivatives. In Thiobacillus denitrificans (strain ATCC 25259 / T1), this protein is Lipoyl synthase.